The following is a 161-amino-acid chain: Large ribosomal subunit protein uL15 (161 aa).

The disordered stretch occupies residues 1–43 (MKLSDIADNAGARKKRMRVGRGIGSGKGKTSGRGGKGQTARSG). The segment covering 21 to 37 (RGIGSGKGKTSGRGGKG) has biased composition (gly residues).

The protein belongs to the universal ribosomal protein uL15 family. Part of the 50S ribosomal subunit.

Its function is as follows. Binds to the 23S rRNA. This chain is Large ribosomal subunit protein uL15, found in Bradyrhizobium sp. (strain ORS 278).